The chain runs to 243 residues: Flavin-dependent thymidylate synthase (243 aa).

Positions 2-207 (VKVKLINYTP…ELKPIIEWAK (206 aa)) constitute a ThyX domain. Residues S56, 80 to 82 (RHR), and Q88 each bind FAD. DUMP contacts are provided by residues 77 to 80 (QLVR), 88 to 92 (QQSQR), and R146. Positions 80–90 (RHRIASYTQQS) match the ThyX motif motif. FAD contacts are provided by residues 162-164 (NLR) and H168. Residue R173 coordinates dUMP. Catalysis depends on R173, which acts as the Involved in ionization of N3 of dUMP, leading to its activation.

The protein belongs to the thymidylate synthase ThyX family. As to quaternary structure, homotetramer. Requires FAD as cofactor.

The catalysed reaction is dUMP + (6R)-5,10-methylene-5,6,7,8-tetrahydrofolate + NADPH + H(+) = dTMP + (6S)-5,6,7,8-tetrahydrofolate + NADP(+). The protein operates within pyrimidine metabolism; dTTP biosynthesis. Its function is as follows. Catalyzes the reductive methylation of 2'-deoxyuridine-5'-monophosphate (dUMP) to 2'-deoxythymidine-5'-monophosphate (dTMP) while utilizing 5,10-methylenetetrahydrofolate (mTHF) as the methyl donor, and NADPH and FADH(2) as the reductant. The chain is Flavin-dependent thymidylate synthase from Pyrococcus horikoshii (strain ATCC 700860 / DSM 12428 / JCM 9974 / NBRC 100139 / OT-3).